Reading from the N-terminus, the 296-residue chain is Sulfotransferase 6B1 (296 aa).

The active-site Proton acceptor is His-112. Residues Arg-134, Ser-142, Tyr-197, and 253–255 (RKG) contribute to the 3'-phosphoadenylyl sulfate site.

The protein belongs to the sulfotransferase 1 family.

It is found in the cytoplasm. The protein resides in the cytosol. It catalyses the reaction thyroxine + 3'-phosphoadenylyl sulfate = thyroxine sulfate + adenosine 3',5'-bisphosphate + H(+). Strongly inhibited by the divalent metal cations Fe(2+), Hg(2+), Co(2+), Zn(2+), Cu(2+) and Cd(2+). Functionally, sulfotransferase that utilizes 3'-phospho-5'-adenylyl sulfate (PAPS) as sulfonate donor to catalyze the sulfate conjugation of a variety of xenobiotic and endogenous compounds, including dopamine, T3 (triiodo-L-thyronine), T4 (thyroxine), flavonoids, isoflavonoids, and other phenolic compounds. The polypeptide is Sulfotransferase 6B1 (Danio rerio (Zebrafish)).